A 300-amino-acid chain; its full sequence is Formate dehydrogenase-O iron-sulfur subunit (300 aa).

The Cytoplasmic portion of the chain corresponds to 1–260 (MAYQSQDIIR…KFWKGIWKPL (260 aa)). 4 consecutive 4Fe-4S ferredoxin-type domains span residues 30 to 60 (VAKL…DTVG), 91 to 123 (LEWL…QYAN), 124 to 153 (GIVD…LNPE), and 158 to 189 (YKCT…FGTK). Residues Cys39, Cys42, Cys45, Cys49, Cys100, Cys103, Cys108, Cys112, Cys133, Cys136, Cys139, Cys143, Cys160, Cys163, Cys175, and Cys179 each coordinate [4Fe-4S] cluster. Residues 261–279 (AAVGFAATFAASIFHYVGV) traverse the membrane as a helical segment. The Periplasmic segment spans residues 280-300 (GPNRADEEENNLHEEKDEERK).

Formate dehydrogenase is a membrane-bound complex, formed by subunits alpha, beta and gamma. [4Fe-4S] cluster serves as cofactor.

Its subcellular location is the cell membrane. Allows to use formate as major electron donor during aerobic respiration. The beta chain is an electron transfer unit containing 4 cysteine clusters involved in the formation of iron-sulfur centers. Electrons are transferred from the gamma chain to the molybdenum cofactor of the alpha subunit. The polypeptide is Formate dehydrogenase-O iron-sulfur subunit (fdoH) (Escherichia coli (strain K12)).